A 192-amino-acid polypeptide reads, in one-letter code: MKLLEERIKRDGEVLDGNVLKINSFLNHQVDPKLMMEVGKEFKRLFAGEQIDKVLTCEASGIAPGVMTAYQLGVPMVFARKKKPSTLNDAVYWADVFSYTKKVNSKICVEEKFLHEGENILIIDDFVAHGEAVKGMVNIAKQAHCNIVGVGAVVAKTFQGGSDWVKDEGLRFESLASIASFKDGQVHFEGEE.

2 residues coordinate xanthine: leucine 20 and asparagine 27. 5-phospho-alpha-D-ribose 1-diphosphate is bound at residue 128–132; sequence AHGEA. Lysine 156 provides a ligand contact to xanthine.

It belongs to the purine/pyrimidine phosphoribosyltransferase family. Xpt subfamily. As to quaternary structure, homodimer.

The protein resides in the cytoplasm. It carries out the reaction XMP + diphosphate = xanthine + 5-phospho-alpha-D-ribose 1-diphosphate. It functions in the pathway purine metabolism; XMP biosynthesis via salvage pathway; XMP from xanthine: step 1/1. Its function is as follows. Converts the preformed base xanthine, a product of nucleic acid breakdown, to xanthosine 5'-monophosphate (XMP), so it can be reused for RNA or DNA synthesis. This chain is Xanthine phosphoribosyltransferase, found in Lactobacillus acidophilus (strain ATCC 700396 / NCK56 / N2 / NCFM).